A 235-amino-acid chain; its full sequence is Probable queuosine precursor transporter (235 aa).

The next 6 helical transmembrane spans lie at 17-37 (IIWL…FVQI), 56-76 (FHST…DLTV), 87-107 (IIFV…VLFS), 127-147 (IAIA…IVFN), 155-175 (WWVA…FVFF), and 201-221 (FKLF…LNVI).

The protein belongs to the vitamin uptake transporter (VUT/ECF) (TC 2.A.88) family. Q precursor transporter subfamily.

It is found in the cell inner membrane. In terms of biological role, involved in the import of queuosine (Q) precursors, required for Q precursor salvage. The polypeptide is Probable queuosine precursor transporter (Haemophilus influenzae (strain ATCC 51907 / DSM 11121 / KW20 / Rd)).